A 601-amino-acid chain; its full sequence is DNA topoisomerase I, mitochondrial (601 aa).

The transit peptide at 1 to 50 (MRVVRLLRLRAALTLLGEVPRRPASRGVPGSRRTQKGSGARWEKEKHEDG) directs the protein to the mitochondrion. Residues 22–48 (RPASRGVPGSRRTQKGSGARWEKEKHE) are disordered. Interaction with DNA regions lie at residues 261 to 262 (KY), 324 to 329 (RAGNEK), and 421 to 423 (TAK). The region spanning 268-601 (CSKLKGETAW…LAMAGEDFEF (334 aa)) is the Topo IB-type catalytic domain. The active-site O-(3'-phospho-DNA)-tyrosine intermediate is the Tyr559.

Belongs to the type IB topoisomerase family. The cofactor is Ca(2+). Mg(2+) serves as cofactor. In terms of tissue distribution, ubiquitous; highest in skeletal muscle, heart, brain and fetal liver.

The protein resides in the mitochondrion. The catalysed reaction is ATP-independent breakage of single-stranded DNA, followed by passage and rejoining.. Its function is as follows. Releases the supercoiling and torsional tension of DNA introduced during duplication of mitochondrial DNA by transiently cleaving and rejoining one strand of the DNA duplex. Introduces a single-strand break via transesterification at a target site in duplex DNA. The scissile phosphodiester is attacked by the catalytic tyrosine of the enzyme, resulting in the formation of a DNA-(3'-phosphotyrosyl)-enzyme intermediate and the expulsion of a 5'-OH DNA strand. The free DNA strand then rotates around the intact phosphodiester bond on the opposing strand, thus removing DNA supercoils. Finally, in the religation step, the DNA 5'-OH attacks the covalent intermediate to expel the active-site tyrosine and restore the DNA phosphodiester backbone. In Homo sapiens (Human), this protein is DNA topoisomerase I, mitochondrial (TOP1MT).